We begin with the raw amino-acid sequence, 342 residues long: S-adenosylmethionine:tRNA ribosyltransferase-isomerase (342 aa).

The protein belongs to the QueA family. In terms of assembly, monomer.

The protein localises to the cytoplasm. The enzyme catalyses 7-aminomethyl-7-carbaguanosine(34) in tRNA + S-adenosyl-L-methionine = epoxyqueuosine(34) in tRNA + adenine + L-methionine + 2 H(+). It participates in tRNA modification; tRNA-queuosine biosynthesis. In terms of biological role, transfers and isomerizes the ribose moiety from AdoMet to the 7-aminomethyl group of 7-deazaguanine (preQ1-tRNA) to give epoxyqueuosine (oQ-tRNA). In Listeria monocytogenes serovar 1/2a (strain ATCC BAA-679 / EGD-e), this protein is S-adenosylmethionine:tRNA ribosyltransferase-isomerase.